The primary structure comprises 155 residues: UPF0303 protein lp_3613 (155 aa).

The protein belongs to the UPF0303 family.

This Lactiplantibacillus plantarum (strain ATCC BAA-793 / NCIMB 8826 / WCFS1) (Lactobacillus plantarum) protein is UPF0303 protein lp_3613.